A 425-amino-acid chain; its full sequence is CinA-like protein (425 aa).

This sequence belongs to the CinA family.

In Shewanella sp. (strain ANA-3), this protein is CinA-like protein.